Here is a 288-residue protein sequence, read N- to C-terminus: Phenazine biosynthesis-like domain-containing protein (288 aa).

Glu-46 is a catalytic residue.

Belongs to the PhzF family. In terms of assembly, interacts with UNRIP/MAWD.

The chain is Phenazine biosynthesis-like domain-containing protein (Pbld) from Rattus norvegicus (Rat).